Reading from the N-terminus, the 129-residue chain is Profilin-4 (129 aa).

It belongs to the profilin family.

The protein resides in the cytoplasm. Its function is as follows. Involved in male fertility. Required for manchette development and acrosome biogenesis during spermiogenesis. Binds in vitro to phospholipids, including phosphatidylinositol 3-phosphate (PtdIns(3)P), phosphatidylinositol 4,5-bisphosphate (PtdIns(4,5)P2), phosphatidylinositol 4-phosphate (PtdIns(4)P) and phosphatidic acid (PA). Contrary to other profilin family members, does not bind to actin in vitro. The sequence is that of Profilin-4 (PFN4) from Bos taurus (Bovine).